The chain runs to 215 residues: Adenylate kinase (215 aa).

10–15 (GAGKGT) contacts ATP. An NMP region spans residues 30–59 (STGDIFRKNISENTPLGMEARSYMDKGLLV). Residues Thr31, Arg36, 57 to 59 (LLV), 85 to 88 (GFPR), and Gln92 contribute to the AMP site. The segment at 126 to 163 (GRRVCTSCGGSFHIKFNPPTIDGKCNLCGSDIVQRKDD) is LID. Arg127 provides a ligand contact to ATP. Cys130 and Cys133 together coordinate Zn(2+). Position 136–137 (136–137 (SF)) interacts with ATP. Zn(2+) contacts are provided by Cys150 and Cys153. The AMP site is built by Arg160 and Arg171. Lys199 lines the ATP pocket.

Belongs to the adenylate kinase family. Monomer.

It localises to the cytoplasm. It catalyses the reaction AMP + ATP = 2 ADP. It participates in purine metabolism; AMP biosynthesis via salvage pathway; AMP from ADP: step 1/1. Its function is as follows. Catalyzes the reversible transfer of the terminal phosphate group between ATP and AMP. Plays an important role in cellular energy homeostasis and in adenine nucleotide metabolism. This Clostridium botulinum (strain Eklund 17B / Type B) protein is Adenylate kinase.